A 617-amino-acid chain; its full sequence is Protein fem-1 homolog C (617 aa).

Met1 is modified (N-acetylmethionine). ANK repeat units follow at residues 2-31, 40-70, 82-111, 115-144, 148-177, 181-210, and 213-242; these read DLKT…KAEV, NGAT…SIEV, EGAP…SVNN, TNST…DLEV, HGHT…DVNR, KGNT…KMEK, and YGMT…TSKT. TPR repeat units follow at residues 245–279 and 338–371; these read INAL…RYSD and SYYI…QQSN. ANK repeat units lie at residues 481-523 and 527-556; these read NNFS…DVNV and DDNS…HFDA.

It belongs to the fem-1 family. Component of a Cul2-RING (CRL2) E3 ubiquitin-protein ligase complex, also named ECS (Elongin BC-CUL2/5-SOCS-box protein) complex, composed of CUL2, Elongin BC (ELOB and ELOC), RBX1 and substrate-specific adapter FEM1C. Widely expressed. Expressed at higher level in testis.

Its pathway is protein modification; protein ubiquitination. In terms of biological role, substrate-recognition component of a Cul2-RING (CRL2) E3 ubiquitin-protein ligase complex of the DesCEND (destruction via C-end degrons) pathway, which recognizes a C-degron located at the extreme C terminus of target proteins, leading to their ubiquitination and degradation. The C-degron recognized by the DesCEND pathway is usually a motif of less than ten residues and can be present in full-length proteins, truncated proteins or proteolytically cleaved forms. The CRL2(FEM1C) complex specifically recognizes proteins with an arginine at the C-terminus: recognizes and binds proteins ending with -Lys/Arg-Xaa-Arg and -Lys/Arg-Xaa-Xaa-Arg C-degrons, such as SIL1 or OR51B2, leading to their ubiquitination and degradation. The CRL2(FEM1C) complex mediates ubiquitination and degradation of truncated MSRB1/SEPX1 selenoproteins produced by failed UGA/Sec decoding. Promotes ubiquitination and degradation of SLBP. The polypeptide is Protein fem-1 homolog C (Mus musculus (Mouse)).